The primary structure comprises 323 residues: Sphingolipid delta(4)-desaturase/C4-monooxygenase DES2 (323 aa).

G2 carries N-myristoyl glycine lipidation. The next 2 membrane-spanning stretches (helical) occupy residues W45 to A65 and W68 to I88. A Histidine box-1 motif is present at residues H89–H93. The required for C4-hydroxylase activity stretch occupies residues T95–T99. Positions H128–H132 match the Histidine box-2 motif. The chain crosses the membrane as a helical span at residues M209 to A231. Positions H259–H263 match the Histidine box-3 motif.

This sequence belongs to the fatty acid desaturase type 1 family. DEGS subfamily.

The protein resides in the endoplasmic reticulum membrane. It catalyses the reaction a dihydroceramide + 2 Fe(II)-[cytochrome b5] + O2 + 2 H(+) = a phytoceramide + 2 Fe(III)-[cytochrome b5] + H2O. The enzyme catalyses an N-acylsphinganine + 2 Fe(II)-[cytochrome b5] + O2 + 2 H(+) = an N-acylsphing-4-enine + 2 Fe(III)-[cytochrome b5] + 2 H2O. The catalysed reaction is N-octanoylsphinganine + 2 Fe(II)-[cytochrome b5] + O2 + 2 H(+) = N-octanoyl-4-hydroxysphinganine + 2 Fe(III)-[cytochrome b5] + H2O. It carries out the reaction an N-acylsphinganine + 2 Fe(II)-[cytochrome b5] + O2 + 2 H(+) = an N-acyl-(4R)-4-hydroxysphinganine + 2 Fe(III)-[cytochrome b5] + H2O. It functions in the pathway membrane lipid metabolism; sphingolipid biosynthesis. In terms of biological role, bifunctional enzyme which acts both as a sphingolipid delta(4)-desaturase and a sphingolipid C4-monooxygenase. This Bos taurus (Bovine) protein is Sphingolipid delta(4)-desaturase/C4-monooxygenase DES2.